Here is a 353-residue protein sequence, read N- to C-terminus: MSLSLNDIKFPSSWDLSPNDLSYIDDIYQEGLDLGVWRKDNQRDKLANENVVSLSKYFWPKVEYKKLIMGGELMLWFFTFDDAIDAGLYSDEKTAEIVKRMDRVFMDGTLPENPTGPEKVALSLRTKCKIMCGEQRKGTFNRFITSCIQWVDSIVPFNKVIANGDSPDLELYGFLRKVNIGAYPCVTLTEVMLESTLEQYIWFDPRWIKMNENIAIVVTLVNDLVSYEKEVRDKMGILNPLFFLQTKLNIELSESYKKLVDMIHHWISEYNELEERFLQLFTTDEEKKQIQFMLDHLHYLISGSRLWSMQTPRYISNTSPFIEMRKNCASLSITSFVSNCAESQRDLKKRKRV.

Residues 81–86 carry the DDxx(x)D/E motif motif; it reads DDAIDA. Residues 222 to 230 carry the NDxxSxxxD/E motif motif; it reads NDLVSYEKE.

Belongs to the terpene synthase family.

It catalyses the reaction (2E,6E)-farnesyl diphosphate = (2S,3R,6S,9S)-(-)-protoillud-7-ene + diphosphate. Functionally, terpene synthase that converts its substrate farnesyl diphosphate (FPP) into the sesquiterpene protoillud-7-ene. This is Terpene synthase 1 from Tieghemostelium lacteum (Slime mold).